A 459-amino-acid chain; its full sequence is MLVTRFAPSPTGYLHIGGLRTALYNYLYARANGGKFLLRIEDTDLKRNSEEATQAIKEAFAWCKLDHDGEVTYQSRRFEIYKEYVAKLLAEGKAYKCYMSKEELDELRKEQEARKERPKYDNRYRDFTGTPPAGIEPVIRIKAPLSGEILIRDGIKGEVKFKVEDILDDFIIARSDGTPTYNFTVVVDDALMGVTHVIRGDDHLSNTPKQIVLYDALGFKRPEFFHVAMINGEDGKKLSKRHGATDVMEYKRMGYLPEALLNFLVRLGWSHGDDEIFSIEDMLKYFDPHDINKSSSTYNAQKLDWLNAHYIKTLPYERLADEMKEFGVDFRALPKGELLLNSLRERSKTLVEMSQSAKAIIDAPAAYDEKAYAKFITPSSLEILAKFAEILTLNLDAAGYEKITNEFLEQNGLKLKDLAQALRVALTGSSVSPSIFEVLEVLGSKEIKQRIQNILKERK.

A 'HIGH' region motif is present at residues 8-18 (PSPTGYLHIGG). Positions 237-241 (KLSKR) match the 'KMSKS' region motif. K240 serves as a coordination point for ATP.

This sequence belongs to the class-I aminoacyl-tRNA synthetase family. Glutamate--tRNA ligase type 1 subfamily. As to quaternary structure, monomer.

It localises to the cytoplasm. It carries out the reaction tRNA(Glu) + L-glutamate + ATP = L-glutamyl-tRNA(Glu) + AMP + diphosphate. Its function is as follows. Catalyzes the attachment of glutamate to tRNA(Glu) in a two-step reaction: glutamate is first activated by ATP to form Glu-AMP and then transferred to the acceptor end of tRNA(Glu). This chain is Glutamate--tRNA ligase 2, found in Campylobacter curvus (strain 525.92).